Consider the following 342-residue polypeptide: Probable transposase for insertion-like sequence element IS1161 (342 aa).

In terms of domain architecture, Integrase catalytic spans 182 to 342; that stretch reads IEERPEEINN…KKLFELTQTA (161 aa).

It belongs to the transposase IS30 family.

Functionally, required for the transposition of the insertion element. In Streptococcus salivarius, this protein is Probable transposase for insertion-like sequence element IS1161.